The chain runs to 122 residues: Small ribosomal subunit protein uS13 (122 aa).

A disordered region spans residues 97–122 (PVRGQRTHTNARTRKGPAKAIAGKKK).

It belongs to the universal ribosomal protein uS13 family. As to quaternary structure, part of the 30S ribosomal subunit. Forms a loose heterodimer with protein S19. Forms two bridges to the 50S subunit in the 70S ribosome.

Its function is as follows. Located at the top of the head of the 30S subunit, it contacts several helices of the 16S rRNA. In the 70S ribosome it contacts the 23S rRNA (bridge B1a) and protein L5 of the 50S subunit (bridge B1b), connecting the 2 subunits; these bridges are implicated in subunit movement. Contacts the tRNAs in the A and P-sites. This is Small ribosomal subunit protein uS13 from Bartonella tribocorum (strain CIP 105476 / IBS 506).